The following is a 974-amino-acid chain: MQLSATSGRTSFRVSQDLRTGPANFLSGLRDDDSLLRQVFFSILRHHHPNLAAKVDVIYALSQAWCTSQSDNDFELMVKYVSDLKPEERILVASSFSHMLNLHNLTEEVNSSQIGRAVRLGEMDSPTRDTNHSLLKLTTTNGFTPQQVYDTLCSQTVELVLTAHPTQALRASLLKKYAIVRRELDTLHSKRMSEYEKIETLEAIRAAVQAAWRTDEIRRSKPTPQDEMRSGLSYFSTVIFDVVPVFHRRVDTALEKLGLPRLPLDRALFKFGSWMGGDRDGNPNVTAETTRDVVVLARLEAVNVYFRQVEGLMFDLSIWRCSPEMKELAERLAAAESRDAARVAEERKRRNYVDFWAPIPPTEPFRVVLAHMRDRLYNTRQVLHQCLIHTHMSVRGALEEAGAYVDIEDMARPLKLMYDSLMSTGDESVANARLLDLLRQIRTFGLCMMGLDVRQESTRHTEVMDAVTTYLGLGSYASWDEPKRLAFLLGELQGKRPLMPPGMDMSPEVKEVVRTLRILSELPGDSLGAYIISMAKTASDVLAVVLLQRETGVRPALRVVPLFETLDDLHNAPGTMTTLLGNDWYRGHINGVQECMIGYSDSGKDAGRLAAAWALYETQEKLVEVAAGCGVRLVLFHGRGGTVGRGGGPTHMAIRSQPSGTINGHLRVTVQGEIIEQQFGEKEVCFRTLDLYTSAVLEAALDPPPAPAQEWRDLMSLLATESCDMYRSVVYRTPEFYDYFMQSTAASELGRLNIGSRPSSRKSGGIETLRAIPWIFAWTQQRLHLPVWLGIGEALEAAIDKGYGPVLQDMYANWPFFTSTLDLVEMVLAKADSRLSAFYERTLVDSSLAPLGQRLRELLAKTQQNILIVVRKSVLLEGNTPSQMSTPNLDEKIRLRSPYVAPLNVLQALSLQGLRKFRDGGDTEYNPSDPEIIDLLSRDPHKKGEGAQHPFVSAMDDCLMITIKGIAAGMQNTG.

Residues H164 and K604 contribute to the active site.

The protein belongs to the PEPCase type 1 family. In terms of assembly, exists as a homotetramer or heterooligomer. The cofactor is Mg(2+).

Its subcellular location is the cytoplasm. It catalyses the reaction oxaloacetate + phosphate = phosphoenolpyruvate + hydrogencarbonate. Its activity is regulated as follows. Activated by glutamine and dihydroxyacetone phosphate. Inhibited by glutamate, aspartate, 2-oxoglutarate and malate. Through the carboxylation of phosphoenolpyruvate (PEP) it forms oxaloacetate, a four-carbon dicarboxylic acid source for the tricarboxylic acid cycle. This is Phosphoenolpyruvate carboxylase 1 from Chlamydomonas reinhardtii (Chlamydomonas smithii).